Here is a 201-residue protein sequence, read N- to C-terminus: ATP-dependent Clp protease proteolytic subunit 2 (201 aa).

Ser-98 functions as the Nucleophile in the catalytic mechanism. Residue His-123 is part of the active site.

It belongs to the peptidase S14 family. Fourteen ClpP subunits assemble into 2 heptameric rings which stack back to back to give a disk-like structure with a central cavity, resembling the structure of eukaryotic proteasomes.

It is found in the cytoplasm. It catalyses the reaction Hydrolysis of proteins to small peptides in the presence of ATP and magnesium. alpha-casein is the usual test substrate. In the absence of ATP, only oligopeptides shorter than five residues are hydrolyzed (such as succinyl-Leu-Tyr-|-NHMec, and Leu-Tyr-Leu-|-Tyr-Trp, in which cleavage of the -Tyr-|-Leu- and -Tyr-|-Trp bonds also occurs).. In terms of biological role, cleaves peptides in various proteins in a process that requires ATP hydrolysis. Has a chymotrypsin-like activity. Plays a major role in the degradation of misfolded proteins. The polypeptide is ATP-dependent Clp protease proteolytic subunit 2 (Rhizobium johnstonii (strain DSM 114642 / LMG 32736 / 3841) (Rhizobium leguminosarum bv. viciae)).